We begin with the raw amino-acid sequence, 72 residues long: Translation initiation factor IF-1 (72 aa).

Positions 1–72 (MAKEENIEMQ…SKGRIIFRAR (72 aa)) constitute an S1-like domain.

The protein belongs to the IF-1 family. Component of the 30S ribosomal translation pre-initiation complex which assembles on the 30S ribosome in the order IF-2 and IF-3, IF-1 and N-formylmethionyl-tRNA(fMet); mRNA recruitment can occur at any time during PIC assembly.

It localises to the cytoplasm. In terms of biological role, one of the essential components for the initiation of protein synthesis. Stabilizes the binding of IF-2 and IF-3 on the 30S subunit to which N-formylmethionyl-tRNA(fMet) subsequently binds. Helps modulate mRNA selection, yielding the 30S pre-initiation complex (PIC). Upon addition of the 50S ribosomal subunit IF-1, IF-2 and IF-3 are released leaving the mature 70S translation initiation complex. This chain is Translation initiation factor IF-1, found in Colwellia psychrerythraea (strain 34H / ATCC BAA-681) (Vibrio psychroerythus).